The chain runs to 842 residues: Protein P (842 aa).

The terminal protein domain (TP) stretch occupies residues 1 to 177 (MPLSYQHFRK…FCGSPYSWEQ (177 aa)). A spacer region spans residues 178–346 (ELQHGRLVFQ…YCLTHIVNLL (169 aa)). Positions 218 to 274 (LKQSRLGLQPQQGSLARGKSGRSGSIRARVPPTTRRSFGVEPSGSGHIDNRASSTSS) are disordered. The segment at 347–690 (EDWGPCTEHG…YLHLYPVARR (344 aa)) is polymerase/reverse transcriptase domain (RT). The region spanning 357–600 (EHNIRIPRTP…YSLNFMGYVI (244 aa)) is the Reverse transcriptase domain. Mg(2+) contacts are provided by D429, D551, and D552.

It belongs to the hepadnaviridae P protein family.

The enzyme catalyses DNA(n) + a 2'-deoxyribonucleoside 5'-triphosphate = DNA(n+1) + diphosphate. It catalyses the reaction Endonucleolytic cleavage to 5'-phosphomonoester.. Activated by host HSP70 and HSP40 in vitro to be able to bind the epsilon loop of the pgRNA. Because deletion of the RNase H region renders the protein partly chaperone-independent, the chaperones may be needed indirectly to relieve occlusion of the RNA-binding site by this domain. Inhibited by several reverse-transcriptase inhibitors: Lamivudine, Adefovir and Entecavir. Multifunctional enzyme that converts the viral RNA genome into dsDNA in viral cytoplasmic capsids. This enzyme displays a DNA polymerase activity that can copy either DNA or RNA templates, and a ribonuclease H (RNase H) activity that cleaves the RNA strand of RNA-DNA heteroduplexes in a partially processive 3'- to 5'-endonucleasic mode. Neo-synthesized pregenomic RNA (pgRNA) are encapsidated together with the P protein, and reverse-transcribed inside the nucleocapsid. Initiation of reverse-transcription occurs first by binding the epsilon loop on the pgRNA genome, and is initiated by protein priming, thereby the 5'-end of (-)DNA is covalently linked to P protein. Partial (+)DNA is synthesized from the (-)DNA template and generates the relaxed circular DNA (RC-DNA) genome. After budding and infection, the RC-DNA migrates in the nucleus, and is converted into a plasmid-like covalently closed circular DNA (cccDNA). The activity of P protein does not seem to be necessary for cccDNA generation, and is presumably released from (+)DNA by host nuclear DNA repair machinery. The sequence is that of Protein P from Hepatitis B virus genotype C subtype adr (isolate Korea/Kim/1989) (HBV-C).